A 204-amino-acid polypeptide reads, in one-letter code: Large ribosomal subunit protein bL25 (204 aa).

Residues 1 to 20 (MSETYELKAETRDRVGKGSS) form a disordered region.

The protein belongs to the bacterial ribosomal protein bL25 family. CTC subfamily. In terms of assembly, part of the 50S ribosomal subunit; part of the 5S rRNA/L5/L18/L25 subcomplex. Contacts the 5S rRNA. Binds to the 5S rRNA independently of L5 and L18.

In terms of biological role, this is one of the proteins that binds to the 5S RNA in the ribosome where it forms part of the central protuberance. This Rhizobium meliloti (strain 1021) (Ensifer meliloti) protein is Large ribosomal subunit protein bL25.